We begin with the raw amino-acid sequence, 158 residues long: NAD(P)H-quinone oxidoreductase subunit J, chloroplastic (158 aa).

The protein belongs to the complex I 30 kDa subunit family. In terms of assembly, NDH is composed of at least 16 different subunits, 5 of which are encoded in the nucleus.

Its subcellular location is the plastid. It is found in the chloroplast thylakoid membrane. It carries out the reaction a plastoquinone + NADH + (n+1) H(+)(in) = a plastoquinol + NAD(+) + n H(+)(out). It catalyses the reaction a plastoquinone + NADPH + (n+1) H(+)(in) = a plastoquinol + NADP(+) + n H(+)(out). Its function is as follows. NDH shuttles electrons from NAD(P)H:plastoquinone, via FMN and iron-sulfur (Fe-S) centers, to quinones in the photosynthetic chain and possibly in a chloroplast respiratory chain. The immediate electron acceptor for the enzyme in this species is believed to be plastoquinone. Couples the redox reaction to proton translocation, and thus conserves the redox energy in a proton gradient. In Cryptomeria japonica (Japanese cedar), this protein is NAD(P)H-quinone oxidoreductase subunit J, chloroplastic.